Consider the following 208-residue polypeptide: MKRPIFIGITGGTGSGKSTIAKEIYRQFGEECIAMIEQDSYYKDQSHLSMDDRVKTNYDHPNAFDNNLLVSHLESLLNGHCIQKPSYDFSIHNRIEDTTKVEPKEIVIVEGILILEDPRIRELLDIKIYVDTDADVRIIRRMVRDINERGRTIESVINQYLNVVKPMHNQFTEPTKKFADIIIPEGGHNKVAIDIIVAKIKEVLGKYE.

11–18 is an ATP binding site; the sequence is GGTGSGKS.

The protein belongs to the uridine kinase family.

It is found in the cytoplasm. It carries out the reaction uridine + ATP = UMP + ADP + H(+). The enzyme catalyses cytidine + ATP = CMP + ADP + H(+). The protein operates within pyrimidine metabolism; CTP biosynthesis via salvage pathway; CTP from cytidine: step 1/3. It functions in the pathway pyrimidine metabolism; UMP biosynthesis via salvage pathway; UMP from uridine: step 1/1. This Clostridium perfringens (strain SM101 / Type A) protein is Uridine kinase.